Consider the following 172-residue polypeptide: Large ribosomal subunit protein uL10 (172 aa).

This sequence belongs to the universal ribosomal protein uL10 family. As to quaternary structure, part of the ribosomal stalk of the 50S ribosomal subunit. The N-terminus interacts with L11 and the large rRNA to form the base of the stalk. The C-terminus forms an elongated spine to which L12 dimers bind in a sequential fashion forming a multimeric L10(L12)X complex.

In terms of biological role, forms part of the ribosomal stalk, playing a central role in the interaction of the ribosome with GTP-bound translation factors. The sequence is that of Large ribosomal subunit protein uL10 from Acidothermus cellulolyticus (strain ATCC 43068 / DSM 8971 / 11B).